A 492-amino-acid chain; its full sequence is DEAD-box ATP-dependent RNA helicase RhpA (492 aa).

The short motif at 20 to 48 is the Q motif element; that stretch reads PSFNDLGLKESVLKSVYEAGFTSPSPIQE. Positions 51-220 constitute a Helicase ATP-binding domain; that stretch reads IPAVLQGRDV…DKILENPIKI (170 aa). 64–71 lines the ATP pocket; sequence AQTGTGKT. A DEAD box motif is present at residues 168-171; it reads DESD. Positions 231 to 393 constitute a Helicase C-terminal domain; it reads DITQRFYVIN…EIPTINENQI (163 aa). The interval 445-492 is disordered; it reads AIQNPKEKTPKPSNKKTPQHERARSFKKGQHRDRHPKTNHYSKKPKRR. The span at 469–492 shows a compositional bias: basic residues; sequence SFKKGQHRDRHPKTNHYSKKPKRR.

This sequence belongs to the DEAD box helicase family. In terms of assembly, homodimer. Interacts with RNase J (rnj), might be a member of a minimal RNA degradosome complex.

It localises to the cytoplasm. It carries out the reaction ATP + H2O = ADP + phosphate + H(+). In terms of biological role, DEAD-box RNA helicase probably involved in RNA degradation. Unwinds dsRNA in both 5'- and 3'-directions. In Helicobacter pylori (strain ATCC 700392 / 26695) (Campylobacter pylori), this protein is DEAD-box ATP-dependent RNA helicase RhpA (rhpA).